Consider the following 2198-residue polypeptide: Activating signal cointegrator 1 complex subunit 3 (2198 aa).

Serine 12 bears the Phosphoserine mark. Coiled-coil stretches lie at residues 18 to 81 (KQDN…KQIV) and 328 to 356 (IQSEQEKQLMKQYRREEKRIARREKKAGE). The Helicase ATP-binding 1 domain maps to 487-670 (ETAYNTNENM…FLHVNPYIGL (184 aa)). 500 to 507 (APTGAGKT) lines the ATP pocket. The residue at position 573 (lysine 573) is an N6-acetyllysine. The DEVH box signature appears at 612 to 615 (DEVH). A Helicase C-terminal 1 domain is found at 697–915 (QLNNMDEVCY…GTVTNVEEAV (219 aa)). Residues 979–1288 (STDLGRTASH…GAEAVCIINF (310 aa)) enclose the SEC63 1 domain. The Helicase ATP-binding 2 domain occupies 1337-1512 (HTLYHTDCNV…WLNIKQMGLF (176 aa)). 1350–1357 (APTGSGKT) contacts ATP. Residues 1454 to 1457 (DEIH) carry the DEIH box motif. Positions 1545–1740 (PAFQAIRSHS…VLSDHLNAEI (196 aa)) constitute a Helicase C-terminal 2 domain. Residues 1813-2177 (PLTCGRIASY…LGLDQQYDIY (365 aa)) enclose the SEC63 2 domain.

Belongs to the helicase family. As to quaternary structure, identified in the ASCC complex that contains ASCC1, ASCC2 and ASCC3. Functions as a scaffolding subunit that interacts directly with both ASCC1 and ASCC2. Interacts directly with ALKBH3, and thereby recruits ALKBH3 to the ASCC complex. Part of the ASC-1/TRIP4 complex, that contains TRIP4, ASCC1, ASCC2 and ASCC3. Part of the RQT (ribosome quality control trigger) complex, that contains ASCC2, ASCC3 and TRIP4. Associates with ribosomes; recruited to collided ribosomes. Interacts with ZCCHC4. Interacts with ZNF598. Interacts with RPS3.

Its subcellular location is the nucleus. It localises to the nucleus speckle. It is found in the cytoplasm. The protein localises to the cytosol. The catalysed reaction is Couples ATP hydrolysis with the unwinding of duplex DNA by translocating in the 3'-5' direction.. It carries out the reaction ATP + H2O = ADP + phosphate + H(+). ATPase involved both in DNA repair and rescue of stalled ribosomes. 3'-5' DNA helicase involved in repair of alkylated DNA: promotes DNA unwinding to generate single-stranded substrate needed for ALKBH3, enabling ALKBH3 to process alkylated N3-methylcytosine (3mC) within double-stranded regions. Also involved in activation of the ribosome quality control (RQC) pathway, a pathway that degrades nascent peptide chains during problematic translation. Drives the splitting of stalled ribosomes that are ubiquitinated in a ZNF598-dependent manner, as part of the ribosome quality control trigger (RQT) complex. Part of the ASC-1 complex that enhances NF-kappa-B, SRF and AP1 transactivation. This Mus musculus (Mouse) protein is Activating signal cointegrator 1 complex subunit 3 (Ascc3).